The sequence spans 121 residues: Two-component response regulator ORR13 (121 aa).

In terms of domain architecture, Response regulatory spans 5-121 (HVLVVDDTHV…ADVPRILNYI (117 aa)). D55 carries the 4-aspartylphosphate modification.

This sequence belongs to the ARR family. Type-A subfamily. Post-translationally, two-component system major event consists of a His-to-Asp phosphorelay between a sensor histidine kinase (HK) and a response regulator (RR). In plants, the His-to-Asp phosphorelay involves an additional intermediate named Histidine-containing phosphotransfer protein (HPt). This multistep phosphorelay consists of a His-Asp-His-Asp sequential transfer of a phosphate group between first a His and an Asp of the HK protein, followed by the transfer to a conserved His of the HPt protein and finally the transfer to an Asp in the receiver domain of the RR protein. In terms of tissue distribution, expressed in flowers and panicles.

Its function is as follows. Functions as a response regulator involved in His-to-Asp phosphorelay signal transduction system. Phosphorylation of the Asp residue in the receiver domain activates the ability of the protein to promote the transcription of target genes. Type-A response regulators seem to act as negative regulators of the cytokinin signaling. This chain is Two-component response regulator ORR13, found in Oryza sativa subsp. japonica (Rice).